We begin with the raw amino-acid sequence, 953 residues long: Coatomer subunit beta-1 (953 aa).

HEAT repeat units follow at residues 49-87 (ETLP…RDVA), 93-127 (PEMI…LNEP), 128-165 (ELLE…LPHG), 314-351 (DVMV…PRNV), and 393-430 (EVAG…TNPK).

Oligomeric complex that consists of at least the alpha, beta, beta', gamma, delta, epsilon and zeta subunits.

It localises to the cytoplasm. The protein localises to the golgi apparatus membrane. It is found in the cytoplasmic vesicle. The protein resides in the COPI-coated vesicle membrane. In terms of biological role, the coatomer is a cytosolic protein complex that binds to dilysine motifs and reversibly associates with Golgi non-clathrin-coated vesicles, which further mediate biosynthetic protein transport from the ER, via the Golgi up to the trans Golgi network. Coatomer complex is required for budding from Golgi membranes, and is essential for the retrograde Golgi-to-ER transport of dilysine-tagged proteins. The protein is Coatomer subunit beta-1 of Oryza sativa subsp. japonica (Rice).